An 83-amino-acid chain; its full sequence is Mu-theraphotoxin-Hhn2b 1 (83 aa).

Positions 1–21 (MKASMFLALAGLVLLFVVCYA) are cleaved as a signal peptide. Positions 22–48 (SESEEKEFPRELISKIFAVDDFKGEER) are excised as a propeptide. Cystine bridges form between Cys-50-Cys-65, Cys-57-Cys-70, and Cys-64-Cys-77. Leucine amide is present on Leu-81.

It belongs to the neurotoxin 10 (Hwtx-1) family. 14 (Hntx-1) subfamily. In terms of assembly, monomer. Expressed by the venom gland.

The protein localises to the secreted. Functionally, weakly blocks the rat SCN2A/SCN1B (Nav1.2/beta-1) sodium channel (IC(50)=68 uM) and the insect sodium channel para/tipE (IC(50)=4.3 uM), without altering the activation or inactivation kinetics (depressant toxin). The protein is Mu-theraphotoxin-Hhn2b 1 of Cyriopagopus hainanus (Chinese bird spider).